The primary structure comprises 400 residues: Phosphoglycerate kinase (400 aa).

Substrate-binding positions include 23 to 25 (DLN), R38, 61 to 64 (HFGR), R120, and R153. ATP-binding positions include K203, E325, and 355-358 (GGDT).

It belongs to the phosphoglycerate kinase family. As to quaternary structure, monomer.

It localises to the cytoplasm. It carries out the reaction (2R)-3-phosphoglycerate + ATP = (2R)-3-phospho-glyceroyl phosphate + ADP. The protein operates within carbohydrate degradation; glycolysis; pyruvate from D-glyceraldehyde 3-phosphate: step 2/5. The polypeptide is Phosphoglycerate kinase (Methylorubrum extorquens (strain CM4 / NCIMB 13688) (Methylobacterium extorquens)).